Here is a 1065-residue protein sequence, read N- to C-terminus: DNA ligase 4 (1065 aa).

The interval 1–20 (MAVHAPYNHAPPPTQEINGQ) is disordered. ATP is bound by residues glutamate 295, lysine 297, leucine 298, arginine 302, glutamate 357, phenylalanine 387, glutamate 452, lysine 457, lysine 474, and lysine 476. The active-site N6-AMP-lysine intermediate is the lysine 297. Glutamate 357 serves as a coordination point for Mg(2+). Glutamate 452 contacts Mg(2+). In terms of domain architecture, BRCT 1 spans 696-775 (VETSIFSDMT…TALPFLKEFL (80 aa)). The disordered stretch occupies residues 825–928 (GEDKDEIDVE…SDVGVNGDDY (104 aa)). 2 stretches are compositionally biased toward basic and acidic residues: residues 834 to 864 (EESR…KKLQ) and 886 to 900 (MSLK…ERSR). Positions 954–1064 (DEDRIFYHLA…TLLDEDLYKP (111 aa)) constitute a BRCT 2 domain.

The protein belongs to the ATP-dependent DNA ligase family. Mg(2+) is required as a cofactor.

The protein resides in the nucleus. It carries out the reaction ATP + (deoxyribonucleotide)n-3'-hydroxyl + 5'-phospho-(deoxyribonucleotide)m = (deoxyribonucleotide)n+m + AMP + diphosphate.. Its function is as follows. DNA ligase involved in DNA non-homologous end joining (NHEJ); required for double-strand break (DSB) repair. The sequence is that of DNA ligase 4 (LIG4) from Cryptococcus neoformans var. neoformans serotype D (strain B-3501A) (Filobasidiella neoformans).